A 131-amino-acid chain; its full sequence is Bypass of stop codon protein 4 (131 aa).

In Saccharomyces cerevisiae (strain ATCC 204508 / S288c) (Baker's yeast), this protein is Bypass of stop codon protein 4 (BSC4).